The chain runs to 631 residues: MSATKLTRREQRARAQHFIDTLEGTAFPNSKRIYITGTHPGVRVPMREIQLSPTLIGGSKEQPQYEENEAIPVYDTSGPYGDPQIAINVQQGLAKLRQPWIDARGDTEELTVRSSDYTKARLADDGLDELRFSGVLTPKRAKAGRRVTQLHYARQGIITPEMEFIAIRENMGRERIRSEVLRHQHPGMSFGAHLPENITAEFVRDEVAAGRAIIPANINHPESEPMIIGRNFLVKVNANIGNSAVTSSIEEEVEKLVWSTRWGADTVMDLSTGRYIHETREWILRNSPVPIGTVPIYQALEKVNGIAEDLTWEAFRDTLLEQAEQGVDYFTIHAGVLLRYVPMTAKRLTGIVSRGGSIMAKWCLSHHQENFLYQHFREICEICAAYDVSLSLGDGLRPGSIQDANDEAQFAELHTLGELTKIAWEYDVQVMIEGPGHVPMQMIRRNMTKELEHCHEAPFYTLGPLTTDIAPGYDHFTSGIGAAMIGWFGCAMLCYVTPKEHLGLPNKEDVKQGLITYKIAAHAADLAKGHPGAQIRDNAMSKARFEFRWEDQFNLALDPFTARAYHDETLPQESGKVAHFCSMCGPKFCSMKISQEVRDYAATQTIEMGMADMSENFRARGGEIYLRKEEA.

Substrate-binding positions include N239, M268, Y297, H333, 353-355 (SRG), 394-397 (DGLR), and E433. H437 contributes to the Zn(2+) binding site. Position 460 (Y460) interacts with substrate. Position 501 (H501) interacts with Zn(2+). C581, C584, and C589 together coordinate [4Fe-4S] cluster.

This sequence belongs to the ThiC family. As to quaternary structure, homodimer. Requires [4Fe-4S] cluster as cofactor.

The catalysed reaction is 5-amino-1-(5-phospho-beta-D-ribosyl)imidazole + S-adenosyl-L-methionine = 4-amino-2-methyl-5-(phosphooxymethyl)pyrimidine + CO + 5'-deoxyadenosine + formate + L-methionine + 3 H(+). It functions in the pathway cofactor biosynthesis; thiamine diphosphate biosynthesis. Its function is as follows. Catalyzes the synthesis of the hydroxymethylpyrimidine phosphate (HMP-P) moiety of thiamine from aminoimidazole ribotide (AIR) in a radical S-adenosyl-L-methionine (SAM)-dependent reaction. The sequence is that of Phosphomethylpyrimidine synthase from Escherichia coli O139:H28 (strain E24377A / ETEC).